The primary structure comprises 308 residues: MTVSQQPLEPTPFGLHRVQAKTTSLEGILPLLTYHGGLIVEGLVSQDILQDIEKELRPHFQQGWNTDPMFSQKTRVVCGLPGKSPTLINECFGHPLFTEVCDALITSHSSSRFGEQRYDFRSPPVLGNTVAFSTLPGNAVQRMHRDDMDHHNMLPAIASDQYEAGRDCVVTLLVAGTRTTKENGATRFIPGSHLQETLHIPDESQAVYIEMQPGDAFILLGSTFHAGSGNVTDEEERILYSVAGVKSILRQTENIYYTLPLEKVREYSPWMQKRLGFSASSPLGGHIDLKDPREVLGLPEPSDIQWFY.

Fe cation is bound by residues His-144 and His-225.

Belongs to the PhyH family. Homodimer. Requires Fe cation as cofactor.

Dioxygenase; part of the gene cluster that mediates the biosynthesis of penifulvin A, a potent insecticidal sesquiterpene that features a [5.5.5.6]dioxafenestrane ring. The first step of the pathway is performed by the sesquiterpene cyclase peniA that generates the angular triquinane scaffold silphinene via cyclization of the linear farnesyl pyrophosphate (FPP). The cytochrome P450 monooxygenase peniB and the flavin-dependent monooxygenase peniC then catalyze a series of oxidation reactions to transform silphinene into penifulvin A. The dioxygenases peniD and peniF, as well as the acetyltransferase peniE, do not seem to be involved in the biosynthesis of penifulvin A. This Penicillium patulum (Penicillium griseofulvum) protein is Dioxygenase peniF.